Reading from the N-terminus, the 246-residue chain is UDP-N-acetyl-D-mannosaminuronic acid transferase (246 aa).

The protein belongs to the glycosyltransferase 26 family.

It carries out the reaction UDP-N-acetyl-alpha-D-mannosaminouronate + N-acetyl-alpha-D-glucosaminyl-di-trans,octa-cis-undecaprenyl diphosphate = beta-D-ManNAcA-(1-&gt;4)-alpha-D-GlcNAc-di-trans,octa-cis-undecaprenyl diphosphate + UDP + H(+). Its pathway is bacterial outer membrane biogenesis; enterobacterial common antigen biosynthesis. Catalyzes the synthesis of Und-PP-GlcNAc-ManNAcA (Lipid II), the second lipid-linked intermediate involved in enterobacterial common antigen (ECA) synthesis. In Yersinia pseudotuberculosis serotype IB (strain PB1/+), this protein is UDP-N-acetyl-D-mannosaminuronic acid transferase.